Here is a 529-residue protein sequence, read N- to C-terminus: Laccase-1 (529 aa).

Positions 1 to 23 (MFPGARILATLTLALHLLHGTHA) are cleaved as a signal peptide. Plastocyanin-like domains follow at residues 25-159 (IGPT…FIVY), 170-312 (DVDN…ILRY), and 380-499 (TAPV…FAED). N-linked (GlcNAc...) asparagine glycosylation is present at Asn-57. The Cu cation site is built by His-96, His-98, His-141, and His-143. Cystine bridges form between Cys-117–Cys-514 and Cys-149–Cys-236. Residues Asn-239 and Asn-282 are each glycosylated (N-linked (GlcNAc...) asparagine). His-425, His-428, His-430, His-481, Cys-482, His-483, and His-487 together coordinate Cu cation.

This sequence belongs to the multicopper oxidase family. It depends on Cu cation as a cofactor.

It localises to the secreted. The enzyme catalyses 4 hydroquinone + O2 = 4 benzosemiquinone + 2 H2O. Functionally, lignin degradation and detoxification of lignin-derived products. The chain is Laccase-1 (POX1) from Pleurotus ostreatus (Oyster mushroom).